The sequence spans 553 residues: CDP-diacylglycerol--glycerol-3-phosphate 3-phosphatidyltransferase, mitochondrial (553 aa).

The transit peptide at 1 to 25 directs the protein to the mitochondrion; it reads MAAPAAGPVFWRRLLGLLPGRPGLA. Ser-46 is modified (phosphoserine). 121-128 is an ATP binding site; the sequence is ASLYLGTG. PLD phosphodiesterase domains lie at 212–238 and 457–490; these read TIGL…SDSY and TGWT…GYRS. Residues His-217, Lys-219, and Asp-224 contribute to the active site.

It belongs to the CDP-alcohol phosphatidyltransferase class-II family.

Its subcellular location is the mitochondrion. The enzyme catalyses a CDP-1,2-diacyl-sn-glycerol + sn-glycerol 3-phosphate = a 1,2-diacyl-sn-glycero-3-phospho-(1'-sn-glycero-3'-phosphate) + CMP + H(+). The protein operates within phospholipid metabolism; phosphatidylglycerol biosynthesis; phosphatidylglycerol from CDP-diacylglycerol: step 1/2. With respect to regulation, activated by calcium and magnesium and inhibited by other bivalent cations. Functionally, functions in the biosynthesis of the anionic phospholipids phosphatidylglycerol and cardiolipin. The polypeptide is CDP-diacylglycerol--glycerol-3-phosphate 3-phosphatidyltransferase, mitochondrial (PGS1) (Cricetulus griseus (Chinese hamster)).